The following is a 248-amino-acid chain: MARTFFVGGNFKLNGSKQSIKEIVERLNTADLADNVEVVICPPATYLDHAVSLVSHPQVTVGAQNAYTKASGAYTGENSVDQIKDVGAKWVILGHSERRTYFNEDDEQVAEKTAFALERGVSVILCIGETLDEKKAGVTLDVVKRQLTPVLEKVKDWTNVVIAYEPVWAIGTGLAATAEDAQDIHAAIRDFLAERTSRDVADAVRILYGGSANGANAASFRDKADVDGFLVGGASLKPEFVDIINSRR.

Substrate contacts are provided by asparagine 10 and lysine 12. The active-site Electrophile is the histidine 95. The Proton acceptor role is filled by glutamate 165.

Belongs to the triosephosphate isomerase family. In terms of assembly, homodimer.

It catalyses the reaction D-glyceraldehyde 3-phosphate = dihydroxyacetone phosphate. It participates in carbohydrate biosynthesis; gluconeogenesis. The protein operates within carbohydrate degradation; glycolysis; D-glyceraldehyde 3-phosphate from glycerone phosphate: step 1/1. This Eremothecium gossypii (strain ATCC 10895 / CBS 109.51 / FGSC 9923 / NRRL Y-1056) (Yeast) protein is Triosephosphate isomerase (TPI1).